Here is a 146-residue protein sequence, read N- to C-terminus: Protein LDOC1 (146 aa).

It belongs to the LDOC1 family. In terms of assembly, interacts with NOD2. Ubiquitously expressed with high levels in brain ant thyroid and low expression in placenta, liver and leukocytes. Expressed as well in six of the seven human breast cancer cell lines examined.

Its subcellular location is the nucleus. Functionally, may have an important role in the development and/or progression of some cancers. The polypeptide is Protein LDOC1 (LDOC1) (Homo sapiens (Human)).